We begin with the raw amino-acid sequence, 277 residues long: DNA-binding transcriptional activator MhpR (277 aa).

In terms of domain architecture, HTH iclR-type spans 12–74; that stretch reads VRGLTRGLML…PSDDSFRLTI (63 aa). The segment at residues 34 to 53 is a DNA-binding region (H-T-H motif); that stretch reads VGLLAELSGLHRTTVRRLLE. An IclR-ED domain is found at 89–262; it reads ISALAAPLLG…AKQIEEGVES (174 aa).

In terms of biological role, activator of the mhpABCDFE operon coding for components of the 3-hydroxyphenylpropionate degradation pathway. In Escherichia coli (strain K12), this protein is DNA-binding transcriptional activator MhpR (mhpR).